Consider the following 185-residue polypeptide: Large ribosomal subunit protein uL5 (185 aa).

It belongs to the universal ribosomal protein uL5 family. As to quaternary structure, part of the 50S ribosomal subunit; part of the 5S rRNA/L5/L18/L25 subcomplex. Contacts the 5S rRNA and the P site tRNA. Forms a bridge to the 30S subunit in the 70S ribosome.

Its function is as follows. This is one of the proteins that bind and probably mediate the attachment of the 5S RNA into the large ribosomal subunit, where it forms part of the central protuberance. In the 70S ribosome it contacts protein S13 of the 30S subunit (bridge B1b), connecting the 2 subunits; this bridge is implicated in subunit movement. Contacts the P site tRNA; the 5S rRNA and some of its associated proteins might help stabilize positioning of ribosome-bound tRNAs. This Rhizobium johnstonii (strain DSM 114642 / LMG 32736 / 3841) (Rhizobium leguminosarum bv. viciae) protein is Large ribosomal subunit protein uL5.